Here is a 460-residue protein sequence, read N- to C-terminus: Cysteine--tRNA ligase (460 aa).

Cysteine 28 contributes to the Zn(2+) binding site. The 'HIGH' region motif lies at 30–40 (MTVYDYCHLGH). The Zn(2+) site is built by cysteine 209, histidine 234, and glutamate 238. Residues 266–270 (KMSKS) carry the 'KMSKS' region motif. ATP is bound at residue lysine 269.

This sequence belongs to the class-I aminoacyl-tRNA synthetase family. As to quaternary structure, monomer. Zn(2+) serves as cofactor.

The protein resides in the cytoplasm. It catalyses the reaction tRNA(Cys) + L-cysteine + ATP = L-cysteinyl-tRNA(Cys) + AMP + diphosphate. The protein is Cysteine--tRNA ligase of Pseudomonas aeruginosa (strain LESB58).